Here is a 297-residue protein sequence, read N- to C-terminus: Transmembrane protein 169 (297 aa).

Positions 1–84 (MEEPALVEGQ…PKEEEGDDFI (84 aa)) are disordered. Residues 1–159 (MEEPALVEGQ…CQLGADRGPH (159 aa)) lie on the Extracellular side of the membrane. Polar residues predominate over residues 9–18 (GQSQLPSPHH). Residues 60-84 (ETLDEEPGESEGGDQPKEEEGDDFI) show a composition bias toward acidic residues. A helical transmembrane segment spans residues 160 to 180 (VVLWTLVCLPVVFLLSFVVSF). The Cytoplasmic portion of the chain corresponds to 181 to 210 (YYGTITWYNIFLVYNEERTFWHKISCCPCL). Residues 211–231 (ILCYPVLIMAMASSLGLYAAV) traverse the membrane as a helical segment. Over 232–297 (VQLSWSWEAW…ATQEIETSAV (66 aa)) the chain is Extracellular.

It is found in the membrane. The polypeptide is Transmembrane protein 169 (TMEM169) (Bos taurus (Bovine)).